The following is a 216-amino-acid chain: Ribosomal RNA small subunit methyltransferase G (216 aa).

S-adenosyl-L-methionine is bound by residues G73, L78, 124–125 (AE), and R139.

This sequence belongs to the methyltransferase superfamily. RNA methyltransferase RsmG family.

The protein localises to the cytoplasm. Functionally, specifically methylates the N7 position of guanine in position 518 of 16S rRNA. The protein is Ribosomal RNA small subunit methyltransferase G of Paenarthrobacter aurescens (strain TC1).